Here is a 2340-residue protein sequence, read N- to C-terminus: Protein pad-1 (2340 aa).

Disordered regions lie at residues Lys-411–Ile-458 and Thr-1910–Pro-1959. A compositionally biased stretch (basic and acidic residues) spans Lys-415–His-432. Residues Ser-437 to Asp-448 show a composition bias toward polar residues. The segment covering Gly-1922–Thr-1934 has biased composition (low complexity).

It belongs to the DOP1 family.

Essential for cell patterning during gastrulation. May be involved in protein traffic between late Golgi and early endosomes. The polypeptide is Protein pad-1 (pad-1) (Caenorhabditis briggsae).